The primary structure comprises 989 residues: Phosphoenolpyruvate carboxylase (989 aa).

Residues His-175 and Lys-630 contribute to the active site.

Belongs to the PEPCase type 1 family. Mg(2+) is required as a cofactor.

It carries out the reaction oxaloacetate + phosphate = phosphoenolpyruvate + hydrogencarbonate. Its function is as follows. Forms oxaloacetate, a four-carbon dicarboxylic acid source for the tricarboxylic acid cycle. The polypeptide is Phosphoenolpyruvate carboxylase (Prochlorococcus marinus (strain MIT 9515)).